The chain runs to 352 residues: Biotin synthase (352 aa).

Residues Asn-44–Gln-262 form the Radical SAM core domain. [4Fe-4S] cluster-binding residues include Cys-59, Cys-63, and Cys-66. [2Fe-2S] cluster contacts are provided by Cys-103, Cys-134, Cys-194, and Arg-266.

It belongs to the radical SAM superfamily. Biotin synthase family. As to quaternary structure, homodimer. The cofactor is [4Fe-4S] cluster. Requires [2Fe-2S] cluster as cofactor.

It carries out the reaction (4R,5S)-dethiobiotin + (sulfur carrier)-SH + 2 reduced [2Fe-2S]-[ferredoxin] + 2 S-adenosyl-L-methionine = (sulfur carrier)-H + biotin + 2 5'-deoxyadenosine + 2 L-methionine + 2 oxidized [2Fe-2S]-[ferredoxin]. The protein operates within cofactor biosynthesis; biotin biosynthesis; biotin from 7,8-diaminononanoate: step 2/2. Catalyzes the conversion of dethiobiotin (DTB) to biotin by the insertion of a sulfur atom into dethiobiotin via a radical-based mechanism. The protein is Biotin synthase of Pseudomonas syringae pv. tomato (strain ATCC BAA-871 / DC3000).